We begin with the raw amino-acid sequence, 681 residues long: Sodium-dependent phosphate transporter 1 (681 aa).

The next 6 helical transmembrane spans lie at 25–45 (YLWM…SVGA), 66–86 (ACIL…AKVS), 106–126 (LMAG…VASF), 162–182 (IVMS…ILFF), 207–227 (ACTV…LLGF), and 234–254 (GTIL…WFFV). A phosphoserine mark is found at Ser269 and Ser273. The disordered stretch occupies residues 269-296 (SPSESPLMEKKNSLKEDHEETKLSVSDI). The segment covering 275–290 (LMEKKNSLKEDHEETK) has biased composition (basic and acidic residues). Helical transmembrane passes span 515 to 535 (VSLL…FAHG), 562 to 582 (VATP…GLWV), 604 to 624 (FSIE…GLPI), and 654 to 674 (IFMA…AIMA). The segment at 554 to 562 (DTGDVSSKV) is a.

The protein belongs to the inorganic phosphate transporter (PiT) (TC 2.A.20) family.

It is found in the cell membrane. It catalyses the reaction 2 Na(+)(out) + phosphate(out) = 2 Na(+)(in) + phosphate(in). Sodium-phosphate symporter which preferentially transports the monovalent form of phosphate with a stoichiometry of two sodium ions per phosphate ion. May play a role in extracellular matrix and cartilage calcification as well as in vascular calcification. Essential for cell proliferation but this function is independent of its phosphate transporter activity. The sequence is that of Sodium-dependent phosphate transporter 1 (Slc20a1) from Felis catus (Cat).